We begin with the raw amino-acid sequence, 1183 residues long: Formin-like protein (1183 aa).

Disordered regions lie at residues 1 to 44 (MGAV…SISS) and 63 to 82 (QHVRQPSLRSRSQQPMPTTD). Residues 23–36 (PHSHAHHHSMRNGH) are compositionally biased toward basic residues. Residues 63–79 (QHVRQPSLRSRSQQPMP) show a composition bias toward polar residues. The 484-residue stretch at 76-559 (QPMPTTDELD…HNEQELKKRD (484 aa)) folds into the GBD/FH3 domain. S225 bears the Phosphoserine mark. Positions 572 to 584 (LSRSLPRSASSGD) are enriched in polar residues. A disordered region spans residues 572-681 (LSRSLPRSAS…PPVAGFMPAP (110 aa)). Pro residues-rich tracts occupy residues 605–614 (LPPPPPPMPA) and 622–640 (APPPPPPPAPPAPPPPPGF). A compositionally biased stretch (low complexity) spans 641–654 (SPLGSPSGSLASTA). The FH2 domain occupies 687-1088 (IKRKVPTKYK…AALAASKKEN (402 aa)). The DAD domain occupies 1136 to 1169 (DEVYNGALEDILLGLKSEPYRRADAVRRSQRRRI).

It belongs to the formin homology family. In terms of assembly, self-associates. Interacts (via GBD/FH3 domain) with Cdc42; the interaction is stronger with the GTP bound form of Cdc42.

Together with Cdc42, involved in establishment of planar cell polarity in the developing compound eye by contributing to ommatidial rotation. Together with DAAM and Cdc42, has a role in neuronal development of mushroom bodies. The polypeptide is Formin-like protein (Drosophila melanogaster (Fruit fly)).